The following is a 671-amino-acid chain: UvrABC system protein B (671 aa).

The Helicase ATP-binding domain occupies 26-183; that stretch reads EGLENGLAHQ…RRLSELQYSR (158 aa). Residue 39–46 participates in ATP binding; the sequence is GVTGSGKT. The Beta-hairpin signature appears at 92-115; it reads YYDYYQPEAYVPSSDTFIEKDASV. The Helicase C-terminal domain maps to 431 to 597; that stretch reads QVDDLLSEIR…GLNKKIGDIL (167 aa). One can recognise a UVR domain in the interval 631 to 666; it reads DQKIRELEAKMYTYAQNLEFEQAAELRDQVHQLRQQ.

It belongs to the UvrB family. As to quaternary structure, forms a heterotetramer with UvrA during the search for lesions. Interacts with UvrC in an incision complex.

Its subcellular location is the cytoplasm. In terms of biological role, the UvrABC repair system catalyzes the recognition and processing of DNA lesions. A damage recognition complex composed of 2 UvrA and 2 UvrB subunits scans DNA for abnormalities. Upon binding of the UvrA(2)B(2) complex to a putative damaged site, the DNA wraps around one UvrB monomer. DNA wrap is dependent on ATP binding by UvrB and probably causes local melting of the DNA helix, facilitating insertion of UvrB beta-hairpin between the DNA strands. Then UvrB probes one DNA strand for the presence of a lesion. If a lesion is found the UvrA subunits dissociate and the UvrB-DNA preincision complex is formed. This complex is subsequently bound by UvrC and the second UvrB is released. If no lesion is found, the DNA wraps around the other UvrB subunit that will check the other stand for damage. This chain is UvrABC system protein B, found in Yersinia pseudotuberculosis serotype IB (strain PB1/+).